Here is a 289-residue protein sequence, read N- to C-terminus: NAD kinase (289 aa).

D68 functions as the Proton acceptor in the catalytic mechanism. Residues 68–69 (DG), K73, 142–143 (ND), R153, D172, 183–188 (TAYSLS), and Q243 each bind NAD(+).

Belongs to the NAD kinase family. It depends on a divalent metal cation as a cofactor.

It is found in the cytoplasm. The enzyme catalyses NAD(+) + ATP = ADP + NADP(+) + H(+). Functionally, involved in the regulation of the intracellular balance of NAD and NADP, and is a key enzyme in the biosynthesis of NADP. Catalyzes specifically the phosphorylation on 2'-hydroxyl of the adenosine moiety of NAD to yield NADP. The sequence is that of NAD kinase from Acetivibrio thermocellus (strain ATCC 27405 / DSM 1237 / JCM 9322 / NBRC 103400 / NCIMB 10682 / NRRL B-4536 / VPI 7372) (Clostridium thermocellum).